Consider the following 481-residue polypeptide: Aromatic amino acid aminotransferase DDB_G0272014 (481 aa).

Position 300 is an N6-(pyridoxal phosphate)lysine (Lys300).

The protein belongs to the class-I pyridoxal-phosphate-dependent aminotransferase family. Pyridoxal 5'-phosphate serves as cofactor.

It localises to the cytoplasm. The enzyme catalyses an aromatic L-alpha-amino acid + 2-oxoglutarate = an aromatic oxo-acid + L-glutamate. Its function is as follows. Has aromatic amino acid transaminase activity. This chain is Aromatic amino acid aminotransferase DDB_G0272014, found in Dictyostelium discoideum (Social amoeba).